Consider the following 508-residue polypeptide: Octopamine receptor beta-1R (508 aa).

Over 1 to 111 (MTLLQRLQAM…SHLALVFVKC (111 aa)) the chain is Extracellular. The chain crosses the membrane as a helical span at residues 112–132 (FIIGFIILAAILGNMLVIVSV). Residues 133–139 (MRHRKLR) are Cytoplasmic-facing. Residues 140 to 160 (IITNYFVVSLAVADMLVALCA) traverse the membrane as a helical segment. Topologically, residues 161–186 (MTFNASVMISGKWMFGSVMCDMWNSF) are extracellular. The N-linked (GlcNAc...) asparagine glycan is linked to Asn164. A helical membrane pass occupies residues 187 to 209 (DVYFSTASIMHLCCISVDRYYAI). The Cytoplasmic portion of the chain corresponds to 210-223 (VQPLDYPLIMTQRR). Residues 224 to 244 (VFIMLLMVWLSPALLSFLPIC) traverse the membrane as a helical segment. Topologically, residues 245–270 (SGWYTTTENYKYLKSNPHICEFKVNK) are extracellular. Residues 271 to 291 (AYAIVSSSMSFWIPGIVMLSM) traverse the membrane as a helical segment. The Cytoplasmic segment spans residues 292-351 (YYRIYQEADRQERLVYRSKVAALLLEKHLQISQIPKPRPSIQVEQSTISTMRRERKAART). The chain crosses the membrane as a helical span at residues 352 to 372 (LGIIMSAFLICWLPFFLWYIV). Residues 373 to 383 (SSLCDSCITPR) lie on the Extracellular side of the membrane. A helical membrane pass occupies residues 384–404 (LLVGILFWIGYFNSALNPIIY). Over 405-508 (AYFNRDFRAA…MQQLHPLYTN (104 aa)) the chain is Cytoplasmic. Positions 440–464 (RDLEFGGPSRRGTNGAQRTGSGSAE) are disordered. Positions 450–461 (RGTNGAQRTGSG) are enriched in polar residues.

This sequence belongs to the G-protein coupled receptor 1 family. In terms of tissue distribution, in the adult, expressed in the superior protocerebrum and the optic lobe medulla of the central nervous system, nurse cells of egg chambers in the ovary at oogenic stages 1-10, and spermatogonia and spermatocytes in the testis. Expressed in embryonic and larval ventral nerve cord and brain lobe, and the larval imaginal disk and larval salivary gland. Also expressed in larval synaptic boutons and retinal cells in the optic disk.

The protein resides in the cell membrane. Its function is as follows. Autoreceptor for octopamine, which is a neurotransmitter, neurohormone, and neuromodulator in invertebrates. Negatively regulates synaptic growth by activating the inhibitory G protein Galphao and limiting cAMP production. Antagonizes the action of Octbeta2R which stimulates synaptic growth. This Drosophila melanogaster (Fruit fly) protein is Octopamine receptor beta-1R.